The following is a 266-amino-acid chain: rRNA adenine N-6-methyltransferase (266 aa).

Residues histidine 14, threonine 16, glycine 41, glutamate 62, aspartate 87, and asparagine 103 each coordinate S-adenosyl-L-methionine.

It belongs to the class I-like SAM-binding methyltransferase superfamily. rRNA adenine N(6)-methyltransferase family.

Functionally, involved in erythromycin resistance. The polypeptide is rRNA adenine N-6-methyltransferase (ermFU) (Bacteroides fragilis).